The following is an 89-amino-acid chain: Small ribosomal subunit protein uS15 (89 aa).

Belongs to the universal ribosomal protein uS15 family. Part of the 30S ribosomal subunit. Forms a bridge to the 50S subunit in the 70S ribosome, contacting the 23S rRNA.

Its function is as follows. One of the primary rRNA binding proteins, it binds directly to 16S rRNA where it helps nucleate assembly of the platform of the 30S subunit by binding and bridging several RNA helices of the 16S rRNA. Functionally, forms an intersubunit bridge (bridge B4) with the 23S rRNA of the 50S subunit in the ribosome. This is Small ribosomal subunit protein uS15 from Streptococcus pyogenes serotype M1.